The primary structure comprises 266 residues: GRIP and coiled-coil domain-containing protein C365.11 (266 aa).

The span at 1–13 (METTVSAKNSLEN) shows a compositional bias: polar residues. The interval 1 to 88 (METTVSAKNS…LDEKVKELEN (88 aa)) is disordered. Position 10 is a phosphoserine (Ser10). Basic residues predominate over residues 36-49 (ASKKKRKNRKKKKN). The segment covering 63 to 88 (EEQRSGSIDSKDKEKPLDEKVKELEN) has biased composition (basic and acidic residues). Positions 73–188 (KDKEKPLDEK…ESVKSHESEL (116 aa)) form a coiled coil. Phosphoserine is present on residues Ser202 and Ser204. The GRIP domain occupies 216 to 264 (ISKELINKEYARNVLLQFLENHEHRDKILPILSTALDLEEVHQHLILKN).

It localises to the cytoplasm. This is GRIP and coiled-coil domain-containing protein C365.11 from Schizosaccharomyces pombe (strain 972 / ATCC 24843) (Fission yeast).